The primary structure comprises 131 residues: MKRRTAREKALQALFQIDVSDIAVNEAIEHALDEEKTDPFFEQLVHGVLEHQDQLDEMISKHLVNWKLDRIANVDRAILRLAAYEMAYAEDIPVNVSMNEAIELAKRFGDDKATKFVNGVLSNIKSDIEQS.

It belongs to the NusB family.

Its function is as follows. Involved in transcription antitermination. Required for transcription of ribosomal RNA (rRNA) genes. Binds specifically to the boxA antiterminator sequence of the ribosomal RNA (rrn) operons. The chain is Transcription antitermination protein NusB from Bacillus subtilis (strain 168).